The following is a 249-amino-acid chain: 3-deoxy-D-manno-octulosonic acid kinase (249 aa).

The active site involves Asp-175.

The protein belongs to the protein kinase superfamily. KdkA/RfaP family.

It localises to the cell inner membrane. It catalyses the reaction an alpha-Kdo-(2-&gt;6)-lipid IVA + ATP = a 4-O-phospho-alpha-Kdo-(2-&gt;6)-lipid IVA + ADP + H(+). It participates in bacterial outer membrane biogenesis; LPS core biosynthesis. In terms of biological role, catalyzes the ATP-dependent phosphorylation of the 3-deoxy-D-manno-octulosonic acid (Kdo) residue in Kdo-lipid IV(A) at the 4-OH position. This Xanthomonas oryzae pv. oryzae (strain PXO99A) protein is 3-deoxy-D-manno-octulosonic acid kinase.